The chain runs to 245 residues: Tetrahydromethanopterin S-methyltransferase subunit A 1 (245 aa).

Topologically, residues 1–222 (MADKKPAADN…AGNYSGKVQG (222 aa)) are cytoplasmic. His-84 contacts 5-hydroxybenzimidazolylcob(I)amide. Residues 223-243 (IMIGLIFTLVIGFLLLMAPLL) traverse the membrane as a helical segment. At 244–245 (GA) the chain is on the extracellular side.

This sequence belongs to the MtrA family. As to quaternary structure, the complex is composed of 8 subunits; MtrA, MtrB, MtrC, MtrD, MtrE, MtrF, MtrG and MtrH. 5-hydroxybenzimidazolylcob(I)amide serves as cofactor.

It localises to the cell membrane. It catalyses the reaction 5-methyl-5,6,7,8-tetrahydromethanopterin + coenzyme M + 2 Na(+)(in) = 5,6,7,8-tetrahydromethanopterin + methyl-coenzyme M + 2 Na(+)(out). It functions in the pathway one-carbon metabolism; methanogenesis from CO(2); methyl-coenzyme M from 5,10-methylene-5,6,7,8-tetrahydromethanopterin: step 2/2. In terms of biological role, part of a complex that catalyzes the formation of methyl-coenzyme M and tetrahydromethanopterin from coenzyme M and methyl-tetrahydromethanopterin. This is an energy-conserving, sodium-ion translocating step. The sequence is that of Tetrahydromethanopterin S-methyltransferase subunit A 1 from Methanobrevibacter ruminantium (strain ATCC 35063 / DSM 1093 / JCM 13430 / OCM 146 / M1) (Methanobacterium ruminantium).